The following is a 364-amino-acid chain: 3-dehydroquinate synthase (364 aa).

Residues 105-109 (GVVGD), 129-130 (TT), Lys-142, and Lys-151 each bind NAD(+). Residues Glu-184, His-247, and His-264 each contribute to the Zn(2+) site.

It belongs to the sugar phosphate cyclases superfamily. Dehydroquinate synthase family. It depends on Co(2+) as a cofactor. Requires Zn(2+) as cofactor. NAD(+) serves as cofactor.

It localises to the cytoplasm. It catalyses the reaction 7-phospho-2-dehydro-3-deoxy-D-arabino-heptonate = 3-dehydroquinate + phosphate. The protein operates within metabolic intermediate biosynthesis; chorismate biosynthesis; chorismate from D-erythrose 4-phosphate and phosphoenolpyruvate: step 2/7. In terms of biological role, catalyzes the conversion of 3-deoxy-D-arabino-heptulosonate 7-phosphate (DAHP) to dehydroquinate (DHQ). The chain is 3-dehydroquinate synthase from Acidithiobacillus ferrooxidans (strain ATCC 23270 / DSM 14882 / CIP 104768 / NCIMB 8455) (Ferrobacillus ferrooxidans (strain ATCC 23270)).